Here is a 186-residue protein sequence, read N- to C-terminus: Myosin light chain 1, skeletal muscle isoform (186 aa).

Residue M1 is modified to Blocked amino end (Met). The segment at M1 to A26 is disordered. Residues A12–A26 are compositionally biased toward pro residues. EF-hand domains follow at residues D42–N77 and A119–K154.

Myosin is a hexamer of 2 heavy chains and 4 light chains.

This chain is Myosin light chain 1, skeletal muscle isoform, found in Chelon ramada (Thin-lipped grey mullet).